The following is a 153-amino-acid chain: 6,7-dimethyl-8-ribityllumazine synthase (153 aa).

Residues phenylalanine 21, 55–57 (AFE), and 79–81 (TVI) contribute to the 5-amino-6-(D-ribitylamino)uracil site. 84–85 (AT) is a (2S)-2-hydroxy-3-oxobutyl phosphate binding site. Histidine 87 acts as the Proton donor in catalysis. Phenylalanine 112 contacts 5-amino-6-(D-ribitylamino)uracil. A (2S)-2-hydroxy-3-oxobutyl phosphate-binding site is contributed by arginine 126.

The protein belongs to the DMRL synthase family. Forms an icosahedral capsid composed of 60 subunits, arranged as a dodecamer of pentamers.

The enzyme catalyses (2S)-2-hydroxy-3-oxobutyl phosphate + 5-amino-6-(D-ribitylamino)uracil = 6,7-dimethyl-8-(1-D-ribityl)lumazine + phosphate + 2 H2O + H(+). It participates in cofactor biosynthesis; riboflavin biosynthesis; riboflavin from 2-hydroxy-3-oxobutyl phosphate and 5-amino-6-(D-ribitylamino)uracil: step 1/2. Functionally, catalyzes the formation of 6,7-dimethyl-8-ribityllumazine by condensation of 5-amino-6-(D-ribitylamino)uracil with 3,4-dihydroxy-2-butanone 4-phosphate. This is the penultimate step in the biosynthesis of riboflavin. The protein is 6,7-dimethyl-8-ribityllumazine synthase of Bacillus anthracis (strain A0248).